An 88-amino-acid chain; its full sequence is Small ribosomal subunit protein bS20 (88 aa).

It belongs to the bacterial ribosomal protein bS20 family.

Its function is as follows. Binds directly to 16S ribosomal RNA. This Clostridium botulinum (strain 657 / Type Ba4) protein is Small ribosomal subunit protein bS20.